A 391-amino-acid polypeptide reads, in one-letter code: Yellow-related salivary protein ASP4 (391 aa).

Positions 1–18 are cleaved as a signal peptide; the sequence is MKIFLCIIAVVSLQGVVA. N-linked (GlcNAc...) asparagine glycosylation occurs at Asn-29.

Belongs to the major royal jelly protein family. In terms of tissue distribution, female salivary gland (at protein level).

It is found in the secreted. In terms of biological role, probably modulates blood feeding of sand flies on vertebrate species by binding and sequestering different mediators involved in the host response. Binds biogenic amines. Binds serotonin and dopamine with high affinity. Binds adrenaline, octopamine and adrenaline with medium affinity. Binds histamine with low affinity. The polypeptide is Yellow-related salivary protein ASP4 (Phlebotomus orientalis (Phlebotomine sand fly)).